The sequence spans 382 residues: uncharacterized protein (382 aa).

The next 12 membrane-spanning stretches (helical) occupy residues 8-28, 45-65, 75-95, 102-122, 131-151, 157-177, 204-224, 231-251, 270-290, 291-311, 325-345, and 349-369; these read VMLLLCGLLLLTLAIAVLNTL, MVSSSYFTGNLVGTLFTGYLI, YLASLIFAAGCVGLGVMVGFW, FIAGIGCAMIWVVVESALMCS, LLAAYMMVYYMGTFLGQLLVS, LLHVLPWVTGMILAGILPLLF, LGVNGCIISGIVLGSLYGLMP, GMANASIGFWMAVLVSAGILG, VQVFVVILGSIAMLTQAAMAP, ALFILGAAGFTLYPVAMAWAC, ALLLSYTVGSLLGPSFAAMLM, and SDNLLFIMIASVSFIYLLMLL.

This sequence belongs to the major facilitator superfamily. YcaD (TC 2.A.1.26) family.

Its subcellular location is the cell inner membrane. This is an uncharacterized protein from Salmonella agona (strain SL483).